We begin with the raw amino-acid sequence, 191 residues long: MKVIKMIILAMTGASGVIYGERILKALRGAGVRIGLMITDTAREIIRYELGIEPGALEELADECFDASDFTTSINSGSSPFRAMVIAPCTMKTLSAIANGYAENSLTRAADVCLKERRDLVLVPRETPLRSVHLENMLRVSREGGIILPAMPGFYHKPASIEDMADFIAGKVLDVLGIENDLFRRWTGKDI.

FMN-binding positions include 13 to 15 (GAS), Thr39, 90 to 93 (TMKT), and Arg125. Residues Tyr155 and Lys171 each contribute to the dimethylallyl phosphate site.

It belongs to the UbiX/PAD1 family.

It catalyses the reaction dimethylallyl phosphate + FMNH2 = prenylated FMNH2 + phosphate. Flavin prenyltransferase that catalyzes the synthesis of the prenylated FMN cofactor (prenyl-FMN) for 4-hydroxy-3-polyprenylbenzoic acid decarboxylase UbiD. The prenyltransferase is metal-independent and links a dimethylallyl moiety from dimethylallyl monophosphate (DMAP) to the flavin N5 and C6 atoms of FMN. The polypeptide is Flavin prenyltransferase UbiX (Methanothermobacter thermautotrophicus (strain ATCC 29096 / DSM 1053 / JCM 10044 / NBRC 100330 / Delta H) (Methanobacterium thermoautotrophicum)).